A 223-amino-acid chain; its full sequence is Deoxyribose-phosphate aldolase (223 aa).

D89 serves as the catalytic Proton donor/acceptor. K152 acts as the Schiff-base intermediate with acetaldehyde in catalysis. Catalysis depends on K181, which acts as the Proton donor/acceptor.

Belongs to the DeoC/FbaB aldolase family. DeoC type 1 subfamily.

It localises to the cytoplasm. It carries out the reaction 2-deoxy-D-ribose 5-phosphate = D-glyceraldehyde 3-phosphate + acetaldehyde. Its pathway is carbohydrate degradation; 2-deoxy-D-ribose 1-phosphate degradation; D-glyceraldehyde 3-phosphate and acetaldehyde from 2-deoxy-alpha-D-ribose 1-phosphate: step 2/2. Catalyzes a reversible aldol reaction between acetaldehyde and D-glyceraldehyde 3-phosphate to generate 2-deoxy-D-ribose 5-phosphate. The protein is Deoxyribose-phosphate aldolase of Listeria monocytogenes serovar 1/2a (strain ATCC BAA-679 / EGD-e).